Here is a 143-residue protein sequence, read N- to C-terminus: Transcriptional regulator MraZ (143 aa).

SpoVT-AbrB domains follow at residues 5-47 and 76-119; these read EYKH…SLKE and ACEC…SENN.

Belongs to the MraZ family. As to quaternary structure, forms oligomers.

Its subcellular location is the cytoplasm. It localises to the nucleoid. In Caldicellulosiruptor bescii (strain ATCC BAA-1888 / DSM 6725 / KCTC 15123 / Z-1320) (Anaerocellum thermophilum), this protein is Transcriptional regulator MraZ.